A 565-amino-acid chain; its full sequence is Arginine--tRNA ligase (565 aa).

Positions 121 to 131 match the 'HIGH' region motif; that stretch reads PNIAKPMGMGH.

The protein belongs to the class-I aminoacyl-tRNA synthetase family. As to quaternary structure, monomer.

The protein resides in the cytoplasm. The catalysed reaction is tRNA(Arg) + L-arginine + ATP = L-arginyl-tRNA(Arg) + AMP + diphosphate. The sequence is that of Arginine--tRNA ligase from Lactobacillus delbrueckii subsp. bulgaricus (strain ATCC BAA-365 / Lb-18).